A 266-amino-acid chain; its full sequence is 3-methyl-2-oxobutanoate hydroxymethyltransferase (266 aa).

Positions 45 and 84 each coordinate Mg(2+). 3-methyl-2-oxobutanoate is bound by residues 45–46 (DS), D84, and K113. E115 provides a ligand contact to Mg(2+). The Proton acceptor role is filled by E183.

This sequence belongs to the PanB family. In terms of assembly, homodecamer; pentamer of dimers. Mg(2+) is required as a cofactor.

The protein resides in the cytoplasm. It carries out the reaction 3-methyl-2-oxobutanoate + (6R)-5,10-methylene-5,6,7,8-tetrahydrofolate + H2O = 2-dehydropantoate + (6S)-5,6,7,8-tetrahydrofolate. The protein operates within cofactor biosynthesis; (R)-pantothenate biosynthesis; (R)-pantoate from 3-methyl-2-oxobutanoate: step 1/2. Catalyzes the reversible reaction in which hydroxymethyl group from 5,10-methylenetetrahydrofolate is transferred onto alpha-ketoisovalerate to form ketopantoate. The polypeptide is 3-methyl-2-oxobutanoate hydroxymethyltransferase (Coxiella burnetii (strain CbuG_Q212) (Coxiella burnetii (strain Q212))).